Consider the following 542-residue polypeptide: Probable E3 ubiquitin-protein ligase ARI11 (542 aa).

The disordered stretch occupies residues 1–25 (MSSSDRDIIDIESGEEDLYSDGGND). Residues 10–19 (DIESGEEDLY) are compositionally biased toward acidic residues. Positions 135 to 342 (VDIQCGICFE…SDHKACNAFK (208 aa)) are TRIAD supradomain. Positions 139, 142, 156, 158, 161, 164, 184, 189, 228, 233, 251, 253, 258, 261, 266, 271, 298, and 301 each coordinate Zn(2+). The RING-type 1 zinc finger occupies 139-189 (CGICFESYTRKEIARVSCGHPYCKTCWTGYITTKIEDGPGCLRVKCPEPSC). An IBR-type zinc finger spans residues 208-271 (DKYYRYFLRS…CEDAHSPVDC (64 aa)). Residues 298 to 328 (CPKCKRPIEKNTGCNHMSCSAPCRHYFCWAC) form an RING-type 2; atypical zinc finger. Cysteine 311 is an active-site residue. Residues cysteine 316, cysteine 320, cysteine 325, cysteine 328, histidine 335, and cysteine 338 each contribute to the Zn(2+) site.

The protein belongs to the RBR family. Ariadne subfamily. Zn(2+) is required as a cofactor.

It carries out the reaction [E2 ubiquitin-conjugating enzyme]-S-ubiquitinyl-L-cysteine + [acceptor protein]-L-lysine = [E2 ubiquitin-conjugating enzyme]-L-cysteine + [acceptor protein]-N(6)-ubiquitinyl-L-lysine.. It functions in the pathway protein modification; protein ubiquitination. Its function is as follows. Might act as an E3 ubiquitin-protein ligase, or as part of E3 complex, which accepts ubiquitin from specific E2 ubiquitin-conjugating enzymes and then transfers it to substrates. This Arabidopsis thaliana (Mouse-ear cress) protein is Probable E3 ubiquitin-protein ligase ARI11 (ARI11).